The following is a 143-amino-acid chain: Flagellar assembly factor FliW (143 aa).

It belongs to the FliW family. As to quaternary structure, interacts with translational regulator CsrA and flagellin(s).

The protein localises to the cytoplasm. Its function is as follows. Acts as an anti-CsrA protein, binds CsrA and prevents it from repressing translation of its target genes, one of which is flagellin. Binds to flagellin and participates in the assembly of the flagellum. The chain is Flagellar assembly factor FliW from Clostridium botulinum (strain ATCC 19397 / Type A).